A 405-amino-acid chain; its full sequence is MCSIGEDDFGDDGAAHAMAVESLPLGIVLSPGNCSKCDVNSDELYKLNFRTAECRECFLAYARHKFRAALGAAKILPRNAEVLLVLDGSAESLVLLDMLHFAQTQNTFKRLHCNARVVYVEEQQVQGRDPVHLEALQNLSTQYAPFDFYVIELGALPSSMQRIKDYSPSLNANNELIHKLQKLRSLTARQDYLQQQRKNLICSVAQCLRCTHVFESNISVDLATQLLTAIALGRGGSAALDVALLDDRLSGDVKLLRPLKDLNEQEIQFYIHAQRLKPLFQKGSRYGREHGQTASLQNLTSAFVANLQQNYASTVSTVFRTGDKIAANSNPEQSSCVHCRSTLDTELSDTLLAIEYSRSVSEAGVSLYKSGQDLEDLAKKRLENKDGLCHACRAIQAELDSGNLL.

This sequence belongs to the CTU2/NCS2 family.

The protein resides in the cytoplasm. It participates in tRNA modification; 5-methoxycarbonylmethyl-2-thiouridine-tRNA biosynthesis. In terms of biological role, plays a central role in 2-thiolation of mcm(5)S(2)U at tRNA wobble positions of tRNA(Lys), tRNA(Glu) and tRNA(Gln). May act by forming a heterodimer with NCS6/CTU1 that ligates sulfur from thiocarboxylated URM1 onto the uridine of tRNAs at wobble position. The protein is Cytoplasmic tRNA 2-thiolation protein 2 of Drosophila simulans (Fruit fly).